The sequence spans 488 residues: Probable aldehyde dehydrogenase (488 aa).

240 to 245 (GSSVTG) lines the NAD(+) pocket. Catalysis depends on residues Glu-262 and Cys-296.

This sequence belongs to the aldehyde dehydrogenase family.

The enzyme catalyses an aldehyde + NAD(+) + H2O = a carboxylate + NADH + 2 H(+). Involved in an alpha-terpineol oxidation system. In Pseudomonas sp, this protein is Probable aldehyde dehydrogenase (terPE).